Consider the following 157-residue polypeptide: Transcriptional repressor NrdR (157 aa).

A zinc finger spans residues Cys-3 to Cys-34. An ATP-cone domain is found at Leu-49–Gln-139.

Belongs to the NrdR family. It depends on Zn(2+) as a cofactor.

In terms of biological role, negatively regulates transcription of bacterial ribonucleotide reductase nrd genes and operons by binding to NrdR-boxes. The sequence is that of Transcriptional repressor NrdR from Staphylococcus carnosus (strain TM300).